A 518-amino-acid polypeptide reads, in one-letter code: Xylose import ATP-binding protein XylG (518 aa).

2 ABC transporter domains span residues 6 to 245 (LQMN…VGRE) and 262 to 507 (FEAR…LSQP). Residue 38–45 (GENGAGKS) participates in ATP binding.

Belongs to the ABC transporter superfamily. Xylose importer (TC 3.A.1.2.4) family. As to quaternary structure, the complex is composed of two ATP-binding proteins (XylG), two transmembrane proteins (XylH) and a solute-binding protein (XylF).

It localises to the cell inner membrane. It carries out the reaction D-xylose(out) + ATP + H2O = D-xylose(in) + ADP + phosphate + H(+). In terms of biological role, part of the ABC transporter complex XylFGH involved in xylose import. Responsible for energy coupling to the transport system. This Pseudomonas fluorescens (strain Pf0-1) protein is Xylose import ATP-binding protein XylG.